The chain runs to 318 residues: Olfactory receptor 13C5 (318 aa).

Topologically, residues 1-25 (MEWENHTILVEFFLKGLSGHPRLEL) are extracellular. A glycan (N-linked (GlcNAc...) asparagine) is linked at N5. The helical transmembrane segment at 26 to 46 (LFFVLIFIMYVVILLGNGTLI) threads the bilayer. The Cytoplasmic segment spans residues 47–54 (LISILDPH). The chain crosses the membrane as a helical span at residues 55-75 (LHTPMYFFLGNLSFLDICYTT). Topologically, residues 76–99 (TSIPSTLVSFLSERKTISLSGCAV) are extracellular. Cysteines 97 and 189 form a disulfide. A helical transmembrane segment spans residues 100 to 120 (QMFLSLAMGTTECVLLGVMAF). Residues 121-139 (DRYVAICNPLRYPIIMSKD) lie on the Cytoplasmic side of the membrane. The chain crosses the membrane as a helical span at residues 140–160 (AYVPMAAGSWIIGAVNSAVQT). The Extracellular portion of the chain corresponds to 161 to 197 (VFVVQLPFCRNNIINHFTCEILAVMKLACADISGNEF). Residues 198–217 (ILLVTTTLFLLTPLLLIIVS) traverse the membrane as a helical segment. The Cytoplasmic segment spans residues 218–237 (YTLIILSIFKISSSEGRSKP). The chain crosses the membrane as a helical span at residues 238–258 (SSTCSARLTVVITFCGTIFLM). The Extracellular segment spans residues 259 to 277 (YMKPKSQETLNSDDLDATD). The helical transmembrane segment at 278-298 (KLIFIFYRVMTPMMNPLIYSL) threads the bilayer. Residues 299–318 (RNKDVKEAVKHLLRRKNFNK) are Cytoplasmic-facing.

Belongs to the G-protein coupled receptor 1 family.

It localises to the cell membrane. Functionally, odorant receptor. This is Olfactory receptor 13C5 (OR13C5) from Homo sapiens (Human).